A 361-amino-acid polypeptide reads, in one-letter code: MSYKENLNPSSYTSKFTTPSSATAAQRVLRKEPYVSTFTTPSDNLLAQRTQLSRITPSASSSVPGRVAVSTEMPSQNTALAEMPKRKFTIDDFDIGRPLGKGKFGNVYLAREKQNKFIMALKVLFKSQLEKEGVEHQLRREIEIQSHLRHPNILRMYNYFHDRKRIYLMLEFAPRGELYKELQKHGRFDEQRSATFMEELADALHYCHERKVIHRDIKPENLLMGYKGELKIADFGWSVHAPSLRRRTMCGTLDYLPPEMIEGKTHDEKVDLWCAGVLCYEFLVGMPPFDSPSHTETHRRIVNVDLKFPPFLSDGSKDLISKLLRYHPPQRLPLKGVMEHPWVKANSRRVLPPVYQSTQSK.

In terms of domain architecture, Protein kinase spans 93-343 (FDIGRPLGKG…LKGVMEHPWV (251 aa)). ATP contacts are provided by residues 99–107 (LGKGKFGNV) and Lys-122. Asp-216 (proton acceptor) is an active-site residue.

This sequence belongs to the protein kinase superfamily. Ser/Thr protein kinase family. Aurora subfamily. In terms of assembly, component of the CPC at least composed of survivin/birc5, incenp, cdca8/borealin and/or cdca9/dasra-A, and aurkb/aurora-B. Interacts directly (via N-terminus and kinase domain) with incenp (via C terminus), and may weakly interact (via N-terminus) with birc5.1 to stabilize the complex. Interacts with mtus1. Mg(2+) serves as cofactor. In terms of processing, phosphorylated, stimulates kinase activity.

It is found in the nucleus. The protein localises to the chromosome. The enzyme catalyses L-seryl-[protein] + ATP = O-phospho-L-seryl-[protein] + ADP + H(+). It carries out the reaction L-threonyl-[protein] + ATP = O-phospho-L-threonyl-[protein] + ADP + H(+). With respect to regulation, kinase activity is stimulated by both birc5/survivin-binding and cell-cycle specific phosphorylation. In terms of biological role, serine/threonine-protein kinase component of the chromosomal passenger complex (CPC), a complex that acts as a key regulator of mitosis. The CPC complex has essential functions at the centromere in ensuring correct chromosome alignment and segregation and is required for chromatin-induced microtubule stabilization and spindle assembly. Involved in the bipolar attachment of spindle microtubules to kinetochores and is a key regulator for the onset of cytokinesis during mitosis. Required for central/midzone spindle assembly and cleavage furrow formation. Key component of the cytokinesis checkpoint, a process required to delay abscission to prevent both premature resolution of intercellular chromosome bridges and accumulation of DNA damage. Phosphorylates 'Ser-10' of histone H3 during mitosis. The polypeptide is Aurora kinase B-A (aurkb-a) (Xenopus laevis (African clawed frog)).